The sequence spans 584 residues: Negative regulator of RAS-cAMP pathway (584 aa).

T25 carries the phosphothreonine modification. Disordered stretches follow at residues 95 to 167 (PIKP…STTS), 209 to 279 (PLQS…SKTS), 291 to 320 (SEDEDSDWDSVSNDSEFYADEDDEEYDDYN), 343 to 366 (NLDSTKSSVSSANTINSNTSHDPV), and 381 to 432 (SNSN…SLKT). Polar residues-rich tracts occupy residues 114–127 (PPTTAKQNVLTRPM), 229–254 (CIDNETSKSTSPTLENMGSRKSSFPQ), and 267–278 (NDQNGQLSLSKT). Phosphoserine is present on residues S247 and S276. Residues 307–320 (FYADEDDEEYDDYN) show a composition bias toward acidic residues. Residues 343–363 (NLDSTKSSVSSANTINSNTSH) show a composition bias toward polar residues. A compositionally biased stretch (low complexity) spans 381–392 (SNSNNHNTAHSE). Residues 398–432 (VSPTPQSSHSNIGPQPQQNPPSANGIKQQKPSLKT) show a composition bias toward polar residues. At S442 the chain carries Phosphoserine. Residue S518 is modified to Phosphoserine; by PKA. The interval 551-584 (DNTSIANSNGNGNDDTSNQRTEALGRKTSNGGRI) is disordered. Residues 557–568 (NSNGNGNDDTSN) are compositionally biased toward low complexity.

It is found in the nucleus. Functionally, negative regulator of Ras-cAMP pathway. Involved in transcriptional regulation of galactose-inducible genes. The protein is Negative regulator of RAS-cAMP pathway (MKS1) of Saccharomyces cerevisiae (strain ATCC 204508 / S288c) (Baker's yeast).